The chain runs to 397 residues: Chorismate synthase (397 aa).

NADP(+)-binding residues include arginine 40 and arginine 46. Residues 129–131, 257–258, glycine 302, 317–321, and arginine 343 each bind FMN; these read RAS, QA, and KPIAT.

This sequence belongs to the chorismate synthase family. In terms of assembly, homotetramer. The cofactor is FMNH2.

The enzyme catalyses 5-O-(1-carboxyvinyl)-3-phosphoshikimate = chorismate + phosphate. The protein operates within metabolic intermediate biosynthesis; chorismate biosynthesis; chorismate from D-erythrose 4-phosphate and phosphoenolpyruvate: step 7/7. Functionally, catalyzes the anti-1,4-elimination of the C-3 phosphate and the C-6 proR hydrogen from 5-enolpyruvylshikimate-3-phosphate (EPSP) to yield chorismate, which is the branch point compound that serves as the starting substrate for the three terminal pathways of aromatic amino acid biosynthesis. This reaction introduces a second double bond into the aromatic ring system. This is Chorismate synthase from Chlorobium phaeobacteroides (strain BS1).